Consider the following 520-residue polypeptide: 4-hydroxyphenylacetate 3-monooxygenase oxygenase component (520 aa).

FAD is bound by residues 155 to 157 (HAI) and threonine 196.

This sequence belongs to the FADH(2)-utilizing monooxygenase family. In terms of assembly, homodimer. HPA 3-hydroxylase consists of a reductase component HpaC and an oxygenase component HpaB. Some form of interactions between the reductase and the oxygenase facilitate the transfer of FADH(-) to the oxygenase in P.aeruginosa, although interactions are not required in other species.

It carries out the reaction 4-hydroxyphenylacetate + FADH2 + O2 = 3,4-dihydroxyphenylacetate + FAD + H2O + H(+). Its pathway is aromatic compound metabolism; 4-hydroxyphenylacetate degradation; pyruvate and succinate semialdehyde from 4-hydroxyphenylacetate: step 1/7. Its function is as follows. Oxygenase component of the 4-hydroxyphenylacetate (HPA) 3-hydroxylase. Catalyzes the hydroxylation of 4-hydroxyphenylacetate to form 3,4-dihydroxyphenylacetate, using FADH(-) provided by the reductase component HpaC to activate oxygen. To a lesser extent, can also use reduced FMN. In vitro, has hydroxylation activity toward tyrosol and various cinnamic acid derivatives, catalyzing the hydroxylation of p-coumaric acid, caffeic acid, ferulic acid, and coniferaldehyde. This chain is 4-hydroxyphenylacetate 3-monooxygenase oxygenase component, found in Pseudomonas aeruginosa (strain ATCC 15692 / DSM 22644 / CIP 104116 / JCM 14847 / LMG 12228 / 1C / PRS 101 / PAO1).